The primary structure comprises 69 residues: UPF0337 protein RB0906 (69 aa).

Belongs to the UPF0337 (CsbD) family.

This Rhizobium meliloti (strain 1021) (Ensifer meliloti) protein is UPF0337 protein RB0906.